A 1327-amino-acid chain; its full sequence is Kinectin (1327 aa).

Topologically, residues 1-8 (MELYESTY) are cytoplasmic. The chain crosses the membrane as a helical; Signal-anchor for type II membrane protein span at residues 9–29 (FIVLIPSVVITVIFLFFWLFM). At 30-1327 (KETLYDEVLA…EVNQQLTKET (1298 aa)) the chain is on the lumenal side. Disordered regions lie at residues 49 to 181 (STKT…EQDK) and 197 to 216 (LSHQDTKQEGGLGKKKGLSK). N-linked (GlcNAc...) asparagine glycosylation is present at N69. Basic and acidic residues-rich tracts occupy residues 73 to 86 (RESDSEHVPRDFKL) and 111 to 135 (VRERQKKEKKQKPSLEEQVIKESDA). A phosphoserine mark is found at S75 and S77. Over residues 163-173 (LKKKAGQKKSK) the composition is skewed to basic residues. The stretch at 329-1327 (ELSGLLHQLQ…EVNQQLTKET (999 aa)) forms a coiled coil. Residue N1031 is glycosylated (N-linked (GlcNAc...) asparagine). Position 1060 is a phosphoserine (S1060). An N-linked (GlcNAc...) asparagine glycan is attached at N1066. S1290 bears the Phosphoserine mark.

It belongs to the kinectin family. In terms of tissue distribution, expressed in all tissues examined including 12-day embryo, adult heart, brain, ovary, kidney, lung, small intestine, spleen, thymus and pancreas.

It is found in the endoplasmic reticulum membrane. Functionally, receptor for kinesin thus involved in kinesin-driven vesicle motility. Accumulates in integrin-based adhesion complexes (IAC) upon integrin aggregation by fibronectin. The sequence is that of Kinectin from Mus musculus (Mouse).